The sequence spans 247 residues: Cross-pathway control protein 1 (247 aa).

Low complexity-rich tracts occupy residues 107–129 and 145–169; these read DAET…AAQA and RPSQ…SGVS. Positions 107–213 are disordered; sequence DAETSAAPAP…RARKAERMDE (107 aa). The 62-residue stretch at 186–247 folds into the bZIP domain; that stretch reads SDTVGMKRAK…LASSQGAAGQ (62 aa). Residues 192 to 210 are basic motif; sequence KRAKNTLAARKSRARKAER. The leucine-zipper stretch occupies residues 214 to 228; sequence LERQVRELEAEKEKL.

It belongs to the bZIP family. GCN4 subfamily. Binds DNA as a dimer.

It localises to the nucleus. Its function is as follows. General amino acid control transactivator. Binds to the AP-1 consensus DNA binding element 5'-[AG]TGACTCAT-3'. This is Cross-pathway control protein 1 (CPC-1) from Cryphonectria parasitica (Chestnut blight fungus).